Reading from the N-terminus, the 452-residue chain is Probable hexaprenyl pyrophosphate synthase, mitochondrial (452 aa).

Isopentenyl diphosphate is bound by residues Lys108, Arg111, and His204. Positions 211 and 215 each coordinate Mg(2+). An an all-trans-polyprenyl diphosphate-binding site is contributed by Arg220. Position 221 (Arg221) interacts with isopentenyl diphosphate. Residues Lys303, Thr304, Gln341, and Lys358 each contribute to the an all-trans-polyprenyl diphosphate site.

This sequence belongs to the FPP/GGPP synthase family. Mg(2+) serves as cofactor.

The protein resides in the mitochondrion. It participates in cofactor biosynthesis; ubiquinone biosynthesis. Assembly of polyisoprenoid side chains. The polyprenyl synthase of coenzyme Q biosynthesis catalyzes the formation from isopentenyl diphosphate of all trans-polyprenyl pyrophosphates generally ranging in length of between 6 and 10 isoprene units depending on the species. The polypeptide is Probable hexaprenyl pyrophosphate synthase, mitochondrial (COQ1) (Yarrowia lipolytica (strain CLIB 122 / E 150) (Yeast)).